A 504-amino-acid chain; its full sequence is Maturase K (504 aa).

The protein belongs to the intron maturase 2 family. MatK subfamily.

The protein resides in the plastid. Its subcellular location is the chloroplast. Usually encoded in the trnK tRNA gene intron. Probably assists in splicing its own and other chloroplast group II introns. In Quercus gemelliflora (Pasang hiris), this protein is Maturase K.